We begin with the raw amino-acid sequence, 235 residues long: DNA repair protein RecO (235 aa).

This sequence belongs to the RecO family.

Its function is as follows. Involved in DNA repair and RecF pathway recombination. The chain is DNA repair protein RecO from Enterobacter sp. (strain 638).